A 369-amino-acid polypeptide reads, in one-letter code: Pyrimidine monooxygenase RutA (369 aa).

FMN-binding positions include 49 to 50 (IK), asparagine 115, glutamate 124, 140 to 141 (RY), and serine 190.

It belongs to the NtaA/SnaA/DszA monooxygenase family. RutA subfamily.

The enzyme catalyses uracil + FMNH2 + NADH + O2 = (Z)-3-ureidoacrylate + FMN + NAD(+) + H2O + H(+). It carries out the reaction thymine + FMNH2 + NADH + O2 = (Z)-2-methylureidoacrylate + FMN + NAD(+) + H2O + H(+). Functionally, catalyzes the pyrimidine ring opening between N-3 and C-4 by an unusual flavin hydroperoxide-catalyzed mechanism, adding oxygen atoms in the process to yield ureidoacrylate peracid, that immediately reacts with FMN forming ureidoacrylate and FMN-N(5)-oxide. The FMN-N(5)-oxide reacts spontaneously with NADH to produce FMN. Requires the flavin reductase RutF to regenerate FMN in vivo. The polypeptide is Pyrimidine monooxygenase RutA (Acinetobacter baylyi (strain ATCC 33305 / BD413 / ADP1)).